The primary structure comprises 243 residues: Tetraspanin-36 (243 aa).

Residues 1–9 are Cytoplasmic-facing; that stretch reads MDCGIITSK. The chain crosses the membrane as a helical span at residues 10–30; sequence TILLLLSLIFWAAGAALAYVG. At 31–49 the chain is on the lumenal side; that stretch reads SYVIKSYNNFEDFMSDRHT. The helical transmembrane segment at 50 to 70 threads the bilayer; sequence LIPAAIIIGVAVVMFIIGFVG. Over 71–84 the chain is Cytoplasmic; sequence CCATLRESKVGLGL. Residues 85 to 105 form a helical membrane-spanning segment; sequence FLIIIMLIFAAEVTAFVFGII. Topologically, residues 106–208 are lumenal; sequence YRGRIRGDLE…QVLQDVLSYA (103 aa). N-linked (GlcNAc...) asparagine glycans are attached at residues Asn149, Asn163, and Asn174. A helical membrane pass occupies residues 209-229; it reads MLVILGFAIIKFFGMLSVCVI. Residues 230–243 lie on the Cytoplasmic side of the membrane; it reads TCKSKKNEYQPLYA.

This sequence belongs to the tetraspanin (TM4SF) family. Post-translationally, N-glycosylated. Strongly expressed in melanophores and xanthophores. Also detected in eye, brain, heart, skin, fin, testis and ovary.

It localises to the golgi apparatus membrane. The protein localises to the endoplasmic reticulum membrane. Plays a role in migration and segregation of pigment cells (melanophores and xanthophores). Contributes to pigment stripe patterning in the epidermis. The sequence is that of Tetraspanin-36 from Danio rerio (Zebrafish).